A 644-amino-acid chain; its full sequence is Low affinity sulfate transporter 3 (644 aa).

The span at 1–19 shows a compositional bias: polar residues; that stretch reads MSSLGTEQFSERSQWVLNS. The interval 1 to 20 is disordered; sequence MSSLGTEQFSERSQWVLNSP. 13 helical membrane-spanning segments follow: residues 50–70, 76–96, 99–119, 124–144, 156–176, 179–199, 242–262, 268–288, 328–348, 394–414, 418–438, 455–475, and 518–538; these read AVSF…YSAT, LLSG…YANL, LDPQ…ALMG, IAIG…PKVI, LVFT…VLRL, LVDF…AIVI, PLNF…RFIG, FFWL…LIVF, IGLI…RSFA, CKTA…LELF, LYYT…PGLI, LACL…GLLI, and PGIL…AGFV. The 125-residue stretch at 511 to 635 folds into the STAS domain; sequence YPMAVTTPGI…LTVAEAVDAC (125 aa).

The protein belongs to the SLC26A/SulP transporter (TC 2.A.53) family.

It localises to the membrane. Its function is as follows. Low-affinity H(+)/sulfate cotransporter which may be involved in the internal transport of sulfate between cellular or subcellular compartments within the plant. This Stylosanthes hamata (Caribbean stylo) protein is Low affinity sulfate transporter 3 (ST3).